We begin with the raw amino-acid sequence, 131 residues long: Transcription antitermination protein NusB (131 aa).

This sequence belongs to the NusB family.

Its function is as follows. Involved in transcription antitermination. Required for transcription of ribosomal RNA (rRNA) genes. Binds specifically to the boxA antiterminator sequence of the ribosomal RNA (rrn) operons. In Ligilactobacillus salivarius (strain UCC118) (Lactobacillus salivarius), this protein is Transcription antitermination protein NusB.